Reading from the N-terminus, the 446-residue chain is UDP-N-acetylmuramoylalanine--D-glutamate ligase (446 aa).

Position 116-122 (Gly116–Thr122) interacts with ATP.

Belongs to the MurCDEF family.

Its subcellular location is the cytoplasm. It carries out the reaction UDP-N-acetyl-alpha-D-muramoyl-L-alanine + D-glutamate + ATP = UDP-N-acetyl-alpha-D-muramoyl-L-alanyl-D-glutamate + ADP + phosphate + H(+). Its pathway is cell wall biogenesis; peptidoglycan biosynthesis. Cell wall formation. Catalyzes the addition of glutamate to the nucleotide precursor UDP-N-acetylmuramoyl-L-alanine (UMA). In Marinobacter nauticus (strain ATCC 700491 / DSM 11845 / VT8) (Marinobacter aquaeolei), this protein is UDP-N-acetylmuramoylalanine--D-glutamate ligase.